Here is a 248-residue protein sequence, read N- to C-terminus: Triosephosphate isomerase (248 aa).

Residues Asn11 and Lys13 each coordinate substrate. The active-site Electrophile is His95. Glu165 functions as the Proton acceptor in the catalytic mechanism.

This sequence belongs to the triosephosphate isomerase family. As to quaternary structure, homodimer.

Its subcellular location is the cytoplasm. The catalysed reaction is D-glyceraldehyde 3-phosphate = dihydroxyacetone phosphate. The enzyme catalyses dihydroxyacetone phosphate = methylglyoxal + phosphate. The protein operates within carbohydrate degradation; glycolysis; D-glyceraldehyde 3-phosphate from glycerone phosphate: step 1/1. It functions in the pathway carbohydrate biosynthesis; gluconeogenesis. Its function is as follows. Triosephosphate isomerase is an extremely efficient metabolic enzyme that catalyzes the interconversion between dihydroxyacetone phosphate (DHAP) and D-glyceraldehyde-3-phosphate (G3P) in glycolysis and gluconeogenesis. Functionally, it is also responsible for the non-negligible production of methylglyoxal a reactive cytotoxic side-product that modifies and can alter proteins, DNA and lipids. The chain is Triosephosphate isomerase (tpi1) from Oryzias latipes (Japanese rice fish).